Here is a 429-residue protein sequence, read N- to C-terminus: MAAAAAVIPPSGLDDGVSRARGEGAGEAVVERGPGAAYHMFVVMEDLVEKLKLLRYEEELLRKSNLKPPSRHYFALPTNPGEQFYMFCTLAAWLINKTGRAFEQPQEYDDPNATISNILSELRSFGRTADFPPSKLKSGYGEQVCYVLDCLAEEALKYIGFTWKRPSYPVEELEEETVPEDDAELTLSKVDEEFVEEETDNEENFIDLNVLKAQTYRLDTNESAKQEDILESTTDAAEWSLEVERVLPQLKVTIRTDNKDWRIHVDQMHQHKSGIESALKETKGFLDKLHNEISRTLEKIGSREKYINNQLEHLVQEYRGAQAQLSEARERYQQGNGGVTERTRLLSEVTEELEKVKQEMEEKGSSMTDGTPLVKIKQSLTKLKQETVQMDIRIGVVEHTLLQSKLKEKCNMTRDMHAAVTPESAIGFY.

The stretch at 305–369 (KYINNQLEHL…MEEKGSSMTD (65 aa)) forms a coiled coil. A pDED region spans residues 335-426 (GNGGVTERTR…HAAVTPESAI (92 aa)).

Belongs to the IFT57 family. Component of the IFT complex B, at least composed of IFT20, IFT22, IFT25, IFT27, IFT46, IFT52, TRAF3IP1/IFT54, IFT57, IFT74, IFT80, IFT81, and IFT88. Interacts with IFT20. Interacts with IFT88. Interacts with IFT80, IFT-81, IFT74, IFT172, IFT70B and KIF17. Interacts with BLOC1S2. Interacts with RYBP. Interacts with HOMER1; the interaction possibly prevents the pro-apoptotic effects of IFT57. Interacts with HIP1. In normal conditions, it poorly interacts with HIP1, HIP1 being strongly associated with HTT. However, in mutant HTT proteins with a long poly-Gln region, interaction between HTT and HIP1 is inhibited, promoting the interaction between HIP1 and IFT57, leading to apoptosis. Interacts with BFAR. Interacts with TTC25. Interacts with USH1G. Present in retina and testis. In brain, it is present in the cortex, striatum, globus pallidus, hypothalamus and cerebellum. Present at high level in neurons and neuropil throughout the brain (at protein level). Expressed in hippocampal neurons, where it colocalizes with HOMER1 at postsynaptic regions.

The protein localises to the cell projection. Its subcellular location is the cilium. It is found in the cytoplasm. It localises to the cytoskeleton. The protein resides in the cilium basal body. The protein localises to the golgi apparatus. Its function is as follows. Required for the formation of cilia. Plays an indirect role in sonic hedgehog signaling, cilia being required for all activity of the hedgehog pathway. Has pro-apoptotic function via its interaction with HIP1, leading to recruit caspase-8 (CASP8) and trigger apoptosis. Has the ability to bind DNA sequence motif 5'-AAAGACATG-3' present in the promoter of caspase genes such as CASP1, CASP8 and CASP10, suggesting that it may act as a transcription regulator; however the relevance of such function remains unclear. The polypeptide is Intraflagellar transport protein 57 homolog (Ift57) (Mus musculus (Mouse)).